The following is a 181-amino-acid chain: Negative modulator of initiation of replication (181 aa).

Interaction with DNA stretches follow at residues 87-88 (AV), 116-120 (RTRVY), and 150-156 (NTNTGRK).

Belongs to the SeqA family. In terms of assembly, homodimer. Polymerizes to form helical filaments.

The protein resides in the cytoplasm. Its function is as follows. Negative regulator of replication initiation, which contributes to regulation of DNA replication and ensures that replication initiation occurs exactly once per chromosome per cell cycle. Binds to pairs of hemimethylated GATC sequences in the oriC region, thus preventing assembly of replication proteins and re-initiation at newly replicated origins. Repression is relieved when the region becomes fully methylated. In Shigella flexneri, this protein is Negative modulator of initiation of replication.